The sequence spans 23 residues: GFGEDIAMKQHQVNSLLDILFVF.

It belongs to the tyrosinase family. Hemocyanin subfamily. In terms of tissue distribution, hemolymph.

It localises to the secreted. It is found in the extracellular space. In terms of biological role, hemocyanins are copper-containing oxygen carriers occurring freely dissolved in the hemolymph of many mollusks and arthropods. The polypeptide is Hemocyanin subunit 4 (Carcinus maenas (Common shore crab)).